The chain runs to 415 residues: Levansucrase LscA (415 aa).

The sucrose site is built by Trp-45, Asp-46, Ala-132, Arg-202, and Asp-203. The Nucleophile role is filled by Asp-46. Glu-287 acts as the Proton donor/acceptor in catalysis.

This sequence belongs to the glycosyl hydrolase 68 family.

The protein resides in the periplasm. It carries out the reaction [6)-beta-D-fructofuranosyl-(2-&gt;](n) alpha-D-glucopyranoside + sucrose = [6)-beta-D-fructofuranosyl-(2-&gt;](n+1) alpha-D-glucopyranoside + D-glucose. Its function is as follows. Catalyzes the synthesis of levan, a fructose polymer, by transferring the fructosyl moiety from sucrose to a growing acceptor molecule. LscA encodes a functional enzyme in vitro, when expressed in E.coli under control of the vector-based lactose promoter (Plac), and it can restore levan production to the lscB-lscC double mutant. However, lscA is not expressed in P.savastanoi pv. glycinea PG4180 under standard conditions. It could be an ancestral Lsc variant in P.syringae. The sequence is that of Levansucrase LscA from Pseudomonas savastanoi pv. glycinea (Pseudomonas syringae pv. glycinea).